The chain runs to 373 residues: Alanine racemase (373 aa).

The active-site Proton acceptor; specific for D-alanine is K35. The residue at position 35 (K35) is an N6-(pyridoxal phosphate)lysine. Residue R130 coordinates substrate. The active-site Proton acceptor; specific for L-alanine is the Y253. M305 is a binding site for substrate.

The protein belongs to the alanine racemase family. It depends on pyridoxal 5'-phosphate as a cofactor.

The catalysed reaction is L-alanine = D-alanine. The protein operates within amino-acid biosynthesis; D-alanine biosynthesis; D-alanine from L-alanine: step 1/1. Its function is as follows. Catalyzes the interconversion of L-alanine and D-alanine. May also act on other amino acids. The polypeptide is Alanine racemase (alr) (Cupriavidus necator (strain ATCC 17699 / DSM 428 / KCTC 22496 / NCIMB 10442 / H16 / Stanier 337) (Ralstonia eutropha)).